We begin with the raw amino-acid sequence, 95 residues long: Costars family protein At4g33640 (95 aa).

Position 1 is an N-acetylmethionine (Met1).

Belongs to the costars family.

The chain is Costars family protein At4g33640 from Arabidopsis thaliana (Mouse-ear cress).